The sequence spans 284 residues: Bifunctional protein FolD (284 aa).

NADP(+) contacts are provided by residues 166-168 and Ile232; that span reads GAS.

It belongs to the tetrahydrofolate dehydrogenase/cyclohydrolase family. As to quaternary structure, homodimer.

It carries out the reaction (6R)-5,10-methylene-5,6,7,8-tetrahydrofolate + NADP(+) = (6R)-5,10-methenyltetrahydrofolate + NADPH. The enzyme catalyses (6R)-5,10-methenyltetrahydrofolate + H2O = (6R)-10-formyltetrahydrofolate + H(+). It participates in one-carbon metabolism; tetrahydrofolate interconversion. Catalyzes the oxidation of 5,10-methylenetetrahydrofolate to 5,10-methenyltetrahydrofolate and then the hydrolysis of 5,10-methenyltetrahydrofolate to 10-formyltetrahydrofolate. The polypeptide is Bifunctional protein FolD (Azotobacter vinelandii (strain DJ / ATCC BAA-1303)).